Consider the following 52-residue polypeptide: Large ribosomal subunit protein bL33 (52 aa).

This sequence belongs to the bacterial ribosomal protein bL33 family.

The chain is Large ribosomal subunit protein bL33 from Helicobacter pylori (strain HPAG1).